Reading from the N-terminus, the 1770-residue chain is MESQQLHQNPHSQHGSAYASVTSKEVPSNQDPLAVSASNLPEFDRDSTKVNSQEETTPGTSAVPENHHHVSPQPASVPPPQNGQYQQHGMMTPNKAMASNWAHYQQPSMMTCSHYQTSPAYYQPDPHYPLPQYIPPLSTSSPDPIDSQDQHSEVPQAKTKVRNNVLPPHTLTSEENFSTWVKFYIRFLKNSNLGDIIPNDQGEIKRQMTYEEHAYIYNTFQAFAPFHLLPTWVKQILEINYSDILTVLCKSVSKMQTNNQELKDWIALANLEYNGSTSADTFEITVSTIIQRLKENNINVSDRLACQLILKGLSGDFKYLRNQYRTKTNMKLSQLFAEIQLIYDENKIMNLNKPSQYKQHSEYKNVSRTSPNTTNTKVTTRNYHRTNSSKPRAAKAHNIATSSKFSRVNSDHINESTVSSQYLSDDNELSLGQQQKESKPTRTIDSNDELPDHLLIDSGASQTLVRSAHYLHHATPNSEINIVDAQKQDIPINAIGNLHFNFQNGTKTSIKALHTPNIAYDLLSLSELANQNITACFTRNTLERSDGTVLAPIVKHGDFYWLSKKYLIPSHISKLTINNVNKSKSVNKYPYPLIHRMLGHANFRSIQKSLKKNAVTYLKESDIEWSNASTYQCPDCLIGKSTKHRHVKGSRLKYQESYEPFQYLHTDIFGPVHHLPKSAPSYFISFTDEKTRFQWVYPLHDRREESILNVFTSILAFIKNQFNARVLVIQMDRGSEYTNKTLHKFFTNRGITACYTTTADSRAHGVAERLNRTLLNDCRTLLHCSGLPNHLWFSAVEFSTIIRNSLVSPKNDKSARQHAGLAGLDITTILPFGQPVIVNNHNPDSKIHPRGIPGYALHPSRNSYGYIIYLPSLKKTVDTTNYVILQNNQTKLDQFDYDTLTFDDDLNRLTAHNQSFIEQNETEQSYDQNTESDHDYQSEIEINSDPLVNDFSSQSLNPLQLDKEPVQKVRAPKEVDADISEYNILPSTIRSRTPHIINKESTEMGGTIESDTTSPRHSSTFTARNQKRPGSPNDMIDLTSQDRVNYGLENIKTTRLGGTEEPYIQRNSDTNIKYRTTNSTPSIDDRSSNSESTTPIISIETKAVCDNTPSIDTDPPEYRSSDHATPNIMPDKSSKNVTADSILDDLPLPDLTHKSPTDTSDVAKDIPHIHSRQTNSSLGGMDDSNVLTTTKSKKRSLEDNETEIEVSRDTWNNKNMRSLEPPRSKKRINLIAAIKGVKSIKPVRTTLRYDEAITYNKDNKEKDRYVEAYHKEISQLLKMNTWDTNKYYDRNDIDPKKVINSMFIFNKKRDGTHKARFVARGDIQHPDTYDSDMQSNTVHHYALMTSLSIALDNDYYITQLDISSAYLYADIKEELYIRPPPHLGLNDKLLRLRKSLYGLKQSGANWYETIKSYLINCCDMQEVRGWSCVFKNSQVTICLFVDDMILFSKDLNANKKIITTLKKQYDTKIINLGEGDNEIQYDILGLEIKYQRSKYMKLGMEKSLTEKLPKLNVPLNPKGKKLRAPGQPGHYIDQDELEIDEDEYKEKVHEMQKLIGLASYVGYKFRFDLLYYINTLAQHILFPSRQVLDMTYELIQFMWDTRDKQLIWHKNKPTKPDNKLVAISDASYGNQPYYKSQIGNIFLLNGKVIGGKSTKASLTCTSTTEAEIHAVSEAIPLLNNLSHLVQELNKKPIIKGLLTDSRSTISIIKSTNEEKFRNRFFGTKAMRLRDEVSGNNLYVYYIETKKNIADVMTKPLPIKTFKLLTNKWIH.

Polar residues-rich tracts occupy residues 1 to 39 and 49 to 60; these read MESQ…SASN and KVNSQEETTPGT. Disordered regions lie at residues 1-89 and 360-449; these read MESQ…QQHG and HSEY…SNDE. The segment at 295–397 is RNA-binding; that stretch reads ENNINVSDRL…SSKPRAAKAH (103 aa). Over residues 369 to 381 the composition is skewed to low complexity; the sequence is TSPNTTNTKVTTR. 2 stretches are compositionally biased toward polar residues: residues 399–408 and 415–435; these read IATSSKFSRV and ESTV…GQQQ. Asp-457 acts as the For protease activity; shared with dimeric partner in catalysis. The integrase-type zinc finger-like stretch occupies residues 579-636; that stretch reads NVNKSKSVNKYPYPLIHRMLGHANFRSIQKSLKKNAVTYLKESDIEWSNASTYQCPDC. The region spanning 656–831 is the Integrase catalytic domain; that stretch reads ESYEPFQYLH…AGLDITTILP (176 aa). 2 residues coordinate Mg(2+): Asp-667 and Asp-732. 3 disordered regions span residues 1005 to 1038, 1059 to 1135, and 1171 to 1222; these read GGTI…MIDL, TEEP…KSSK, and SRQT…LEPP. Composition is skewed to polar residues over residues 1009 to 1024 and 1065 to 1082; these read ESDT…FTAR and QRNS…STPS. The Bipartite nuclear localization signal motif lies at 1193–1227; the sequence is KKRSLEDNETEIEVSRDTWNNKNMRSLEPPRSKKR. The Reverse transcriptase Ty1/copia-type domain maps to 1353-1491; that stretch reads NDYYITQLDI…DILGLEIKYQ (139 aa). Residues Asp-1361, Asp-1442, Asp-1443, Asp-1625, Glu-1667, and Asp-1700 each contribute to the Mg(2+) site. The RNase H Ty1/copia-type domain occupies 1625 to 1767; that stretch reads DASYGNQPYY…IKTFKLLTNK (143 aa).

In terms of assembly, the capsid protein forms a homotrimer, from which the VLPs are assembled. The protease is a homodimer, whose active site consists of two apposed aspartic acid residues. In terms of processing, initially, virus-like particles (VLPs) are composed of the structural unprocessed proteins Gag and Gag-Pol, and also contain the host initiator methionine tRNA (tRNA(i)-Met) which serves as a primer for minus-strand DNA synthesis, and a dimer of genomic Ty RNA. Processing of the polyproteins occurs within the particle and proceeds by an ordered pathway, called maturation. First, the protease (PR) is released by autocatalytic cleavage of the Gag-Pol polyprotein, and this cleavage is a prerequisite for subsequent processing at the remaining sites to release the mature structural and catalytic proteins. Maturation takes place prior to the RT reaction and is required to produce transposition-competent VLPs.

The protein localises to the cytoplasm. The protein resides in the nucleus. The enzyme catalyses DNA(n) + a 2'-deoxyribonucleoside 5'-triphosphate = DNA(n+1) + diphosphate. It catalyses the reaction Endonucleolytic cleavage to 5'-phosphomonoester.. Capsid protein (CA) is the structural component of the virus-like particle (VLP), forming the shell that encapsulates the retrotransposons dimeric RNA genome. The particles are assembled from trimer-clustered units and there are holes in the capsid shells that allow for the diffusion of macromolecules. CA also has nucleocapsid-like chaperone activity, promoting primer tRNA(i)-Met annealing to the multipartite primer-binding site (PBS), dimerization of Ty2 RNA and initiation of reverse transcription. In terms of biological role, the aspartyl protease (PR) mediates the proteolytic cleavages of the Gag and Gag-Pol polyproteins after assembly of the VLP. Functionally, reverse transcriptase/ribonuclease H (RT) is a multifunctional enzyme that catalyzes the conversion of the retro-elements RNA genome into dsDNA within the VLP. The enzyme displays a DNA polymerase activity that can copy either DNA or RNA templates, and a ribonuclease H (RNase H) activity that cleaves the RNA strand of RNA-DNA heteroduplexes during plus-strand synthesis and hydrolyzes RNA primers. The conversion leads to a linear dsDNA copy of the retrotransposon that includes long terminal repeats (LTRs) at both ends. Its function is as follows. Integrase (IN) targets the VLP to the nucleus, where a subparticle preintegration complex (PIC) containing at least integrase and the newly synthesized dsDNA copy of the retrotransposon must transit the nuclear membrane. Once in the nucleus, integrase performs the integration of the dsDNA into the host genome. The polypeptide is Transposon Ty2-DR2 Gag-Pol polyprotein (TY2B-DR2) (Saccharomyces cerevisiae (strain ATCC 204508 / S288c) (Baker's yeast)).